A 129-amino-acid chain; its full sequence is Large ribosomal subunit protein uL22 (129 aa).

It belongs to the universal ribosomal protein uL22 family. As to quaternary structure, part of the 50S ribosomal subunit.

In terms of biological role, this protein binds specifically to 23S rRNA; its binding is stimulated by other ribosomal proteins, e.g. L4, L17, and L20. It is important during the early stages of 50S assembly. It makes multiple contacts with different domains of the 23S rRNA in the assembled 50S subunit and ribosome. Functionally, the globular domain of the protein is located near the polypeptide exit tunnel on the outside of the subunit, while an extended beta-hairpin is found that lines the wall of the exit tunnel in the center of the 70S ribosome. This is Large ribosomal subunit protein uL22 from Bartonella henselae (strain ATCC 49882 / DSM 28221 / CCUG 30454 / Houston 1) (Rochalimaea henselae).